A 699-amino-acid polypeptide reads, in one-letter code: Receptor-type tyrosine-protein phosphatase epsilon (699 aa).

The N-terminal stretch at 1–19 is a signal peptide; the sequence is MEPFCPLLLASFSLSLARA. Low complexity predominate over residues 20–36; it reads GQGNDTTPTESNWTSTT. Positions 20-40 are disordered; it reads GQGNDTTPTESNWTSTTAGPP. At 20-45 the chain is on the extracellular side; the sequence is GQGNDTTPTESNWTSTTAGPPDPGAS. N-linked (GlcNAc...) asparagine glycosylation is found at N23 and N31. The helical transmembrane segment at 46–68 threads the bilayer; the sequence is QPLLTWLLLPLLLLLFLLAAYFF. At 69–699 the chain is on the cytoplasmic side; the sequence is RFRKQRKAVV…DIFSDYANFK (631 aa). 2 consecutive Tyrosine-protein phosphatase domains span residues 134-393 and 425-688; these read FREE…LLEY and LEEE…VQDF. Residues D302, 334–340, and Q378 contribute to the substrate site; that span reads CSAGVGR. C334 functions as the Phosphocysteine intermediate in the catalytic mechanism. Catalysis depends on C629, which acts as the Phosphocysteine intermediate. Phosphotyrosine is present on Y695.

This sequence belongs to the protein-tyrosine phosphatase family. Receptor class 4 subfamily. As to quaternary structure, monomer. Isoform 2: Homodimer. Can form oligomers. Dimerization is increased by oxidative stress and decreased by EGFR. Isoform 2 interacts with GRB2. In terms of processing, a catalytically active cytoplasmic form (p65) is produced by proteolytic cleavage of either isoform 1, isoform 2 or isoform 3. Phosphorylated on tyrosine residues by tyrosine kinase Neu. Post-translationally, glycosylated. In terms of tissue distribution, isoform 2 is expressed in the spleen and thymus (at protein level). Detected in fibroblasts, myeloid cells, macrophages, and T-cells but not in B-cell lines. Isoform 1 and isoform 2 are expressed predominantly in the brain, testes, and lungs, with lower levels present in lymph nodes, thymus, spleen, heart and mammary glands. Isoform 1 is expressed in osteoclasts and not in osteoblasts and its expression is related to osteoclast differentiation. It is also expressed in the erythrocytes. Isoform 2 is strongly expressed in skeletal muscle and L6 skeletal muscle cell line.

It localises to the cell membrane. The protein localises to the cytoplasm. It carries out the reaction O-phospho-L-tyrosyl-[protein] + H2O = L-tyrosyl-[protein] + phosphate. With respect to regulation, inhibited by alendronate (ALN), orthovanadate, and phenylarsine oxide (PAO). In terms of biological role, acts as a negative regulator of insulin receptor (IR) signaling and is involved in insulin-induced glucose metabolism mainly through direct dephosphorylation and inactivation of IR in hepatocytes and liver. Plays a critical role in signaling transduction pathways and phosphoprotein network topology in red blood cells. May play a role in osteoclast formation and function. Acts as a negative regulator of insulin receptor (IR) signaling in skeletal muscle. Regulates insulin-induced tyrosine phosphorylation of insulin receptor (IR) and insulin receptor substrate 1 (IRS-1), phosphorylation of protein kinase B and glycogen synthase kinase-3 and insulin induced stimulation of glucose uptake. Its function is as follows. Isoform 1 and isoform 2 act as a negative regulator of FceRI-mediated signal transduction leading to cytokine production and degranulation, most likely by acting at the level of SYK to affect downstream events such as phosphorylation of SLP76 and LAT and mobilization of Ca(2+). In Mus musculus (Mouse), this protein is Receptor-type tyrosine-protein phosphatase epsilon (Ptpre).